We begin with the raw amino-acid sequence, 250 residues long: ATP synthase subunit a (250 aa).

5 consecutive transmembrane segments (helical) span residues 27–47, 86–106, 129–149, 191–211, and 219–239; these read TDTV…AFYL, FVLP…WLAV, INYV…AGIW, IFAG…IMWA, and FDLF…ILYF.

Belongs to the ATPase A chain family. In terms of assembly, F-type ATPases have 2 components, CF(1) - the catalytic core - and CF(0) - the membrane proton channel. CF(1) has five subunits: alpha(3), beta(3), gamma(1), delta(1), epsilon(1). CF(0) has three main subunits: a(1), b(2) and c(9-12). The alpha and beta chains form an alternating ring which encloses part of the gamma chain. CF(1) is attached to CF(0) by a central stalk formed by the gamma and epsilon chains, while a peripheral stalk is formed by the delta and b chains.

The protein localises to the cell membrane. Its function is as follows. Key component of the proton channel; it plays a direct role in the translocation of protons across the membrane. In Mycobacterium bovis (strain ATCC BAA-935 / AF2122/97), this protein is ATP synthase subunit a.